Here is a 144-residue protein sequence, read N- to C-terminus: Large ribosomal subunit protein uL11 (144 aa).

The protein belongs to the universal ribosomal protein uL11 family. Part of the ribosomal stalk of the 50S ribosomal subunit. Interacts with L10 and the large rRNA to form the base of the stalk. L10 forms an elongated spine to which L12 dimers bind in a sequential fashion forming a multimeric L10(L12)X complex. In terms of processing, one or more lysine residues are methylated.

Its function is as follows. Forms part of the ribosomal stalk which helps the ribosome interact with GTP-bound translation factors. This Francisella tularensis subsp. holarctica (strain OSU18) protein is Large ribosomal subunit protein uL11.